The primary structure comprises 152 residues: Non-specific lipid transfer protein GPI-anchored 8 (152 aa).

A signal peptide spans 1–23; sequence MNITRILGVVTTVVILYSVQVTA. 3 disulfide bridges follow: Cys42–Cys56, Cys57–Cys98, and Cys70–Cys107. Asn108 carries N-linked (GlcNAc...) asparagine glycosylation. Ser124 is lipidated: GPI-anchor amidated serine. Residues 125 to 152 constitute a propeptide, removed in mature form; that stretch reads GNSFSTKKNTALAITFFGFSFVFLGMII.

It belongs to the plant LTP family.

It localises to the cell membrane. In terms of biological role, probable lipid transfer protein. The chain is Non-specific lipid transfer protein GPI-anchored 8 from Arabidopsis thaliana (Mouse-ear cress).